The primary structure comprises 282 residues: Bis(5'-nucleosyl)-tetraphosphatase, symmetrical (282 aa).

The protein belongs to the Ap4A hydrolase family.

The enzyme catalyses P(1),P(4)-bis(5'-adenosyl) tetraphosphate + H2O = 2 ADP + 2 H(+). Its function is as follows. Hydrolyzes diadenosine 5',5'''-P1,P4-tetraphosphate to yield ADP. The protein is Bis(5'-nucleosyl)-tetraphosphatase, symmetrical of Escherichia coli O7:K1 (strain IAI39 / ExPEC).